A 205-amino-acid chain; its full sequence is tRNA (guanine-N(7)-)-methyltransferase (205 aa).

4 residues coordinate S-adenosyl-L-methionine: glutamate 34, glutamate 59, aspartate 86, and aspartate 107. Aspartate 107 is an active-site residue. Residue lysine 111 participates in substrate binding. The interval 113 to 118 (RHEKRR) is interaction with RNA. Residues aspartate 144 and 182–185 (TGYE) contribute to the substrate site.

This sequence belongs to the class I-like SAM-binding methyltransferase superfamily. TrmB family.

It carries out the reaction guanosine(46) in tRNA + S-adenosyl-L-methionine = N(7)-methylguanosine(46) in tRNA + S-adenosyl-L-homocysteine. It functions in the pathway tRNA modification; N(7)-methylguanine-tRNA biosynthesis. Functionally, catalyzes the formation of N(7)-methylguanine at position 46 (m7G46) in tRNA. This chain is tRNA (guanine-N(7)-)-methyltransferase, found in Mycoplasmopsis synoviae (strain 53) (Mycoplasma synoviae).